Reading from the N-terminus, the 339-residue chain is UPF0324 membrane protein SpyM3_0740 (339 aa).

Helical transmembrane passes span 7–24 (KLPG…AWYL), 28–50 (FPII…FYHH), 57–79 (GISF…GLNL), 84–106 (AVGM…VAYG), 118–140 (ATLV…APVI), 150–172 (AISV…GQLL), 256–275 (FILF…SLGV), 290–307 (FIVM…LVKL), and 314–336 (AILL…QLSL).

Belongs to the UPF0324 family.

The protein resides in the cell membrane. The sequence is that of UPF0324 membrane protein SpyM3_0740 from Streptococcus pyogenes serotype M3 (strain ATCC BAA-595 / MGAS315).